A 255-amino-acid polypeptide reads, in one-letter code: BTB/POZ domain-containing protein kctd15 (255 aa).

A BTB domain is found at 30-100; sequence APVHIDVGGH…LRTSKLLLPE (71 aa).

Forms oligomers, predominantly homopentamers. Interacts with TFAP2A; this interaction inhibits TFAP2A transcriptional activation.

The protein resides in the nucleus. During embryonic development, interferes with neural crest formation. Inhibits AP2 transcriptional activity by interaction with its activation domain. This chain is BTB/POZ domain-containing protein kctd15 (kctd15), found in Xenopus tropicalis (Western clawed frog).